A 418-amino-acid polypeptide reads, in one-letter code: Serine protease inhibitor A3M (418 aa).

Residues 1 to 20 (MAFIAALGILMAGICPTVLC) form the signal peptide. Asparagine 104, asparagine 184, and asparagine 269 each carry an N-linked (GlcNAc...) asparagine glycan. Residues 367–392 (GTEAAAATGFIFGFRSRRLQTMTVQF) form an RCL region.

Belongs to the serpin family. In terms of tissue distribution, expressed in liver and testis.

Its subcellular location is the secreted. The polypeptide is Serine protease inhibitor A3M (Serpina3m) (Mus musculus (Mouse)).